The primary structure comprises 432 residues: Homogentisate 1,2-dioxygenase (432 aa).

The active-site Proton acceptor is the His-287. Fe cation contacts are provided by His-330 and Glu-336. Homogentisate is bound by residues Tyr-345 and His-366. His-366 contacts Fe cation.

The protein belongs to the homogentisate dioxygenase family. As to quaternary structure, hexamer; dimer of trimers. The cofactor is Fe cation.

The catalysed reaction is homogentisate + O2 = 4-maleylacetoacetate + H(+). Its pathway is amino-acid degradation; L-phenylalanine degradation; acetoacetate and fumarate from L-phenylalanine: step 4/6. In terms of biological role, involved in the catabolism of homogentisate (2,5-dihydroxyphenylacetate or 2,5-OH-PhAc), a central intermediate in the degradation of phenylalanine and tyrosine. Catalyzes the oxidative ring cleavage of the aromatic ring of homogentisate to yield maleylacetoacetate. This Pseudomonas aeruginosa (strain ATCC 15692 / DSM 22644 / CIP 104116 / JCM 14847 / LMG 12228 / 1C / PRS 101 / PAO1) protein is Homogentisate 1,2-dioxygenase.